We begin with the raw amino-acid sequence, 509 residues long: Protein WHAT'S THIS FACTOR 1 homolog, chloroplastic (509 aa).

A chloroplast-targeting transit peptide spans 1–56; it reads MDAKLLLLPFPSPPATLHHHPPPPKSLFLGASLPLLHPPPPLRLLRPGAPRRLAVV. Positions 65 to 393 constitute a PORR domain; that stretch reads KEIPFDNVIQ…LKEKMRALVA (329 aa). Disordered stretches follow at residues 402 to 431 and 444 to 509; these read VPAT…DEDE and SGGK…RERW. The span at 461–474 shows a compositional bias: acidic residues; it reads ENDDSPPDFEDDDG.

It is found in the plastid. Its subcellular location is the chloroplast. Its function is as follows. RNA-binding protein involved in group II intron splicing. Binds specific group II introns and promotes their splicing. Functions in the context of a heterodimer with the ribonuclease III domain-containing protein RNC1. This chain is Protein WHAT'S THIS FACTOR 1 homolog, chloroplastic, found in Oryza sativa subsp. japonica (Rice).